The sequence spans 440 residues: UDP-glucose 6-dehydrogenase YwqF (440 aa).

NAD(+) is bound by residues 2–19 (NITVIGTGYVGLVTGVSL), Val-11, Asp-30, Lys-35, Thr-121, and Glu-155. Substrate is bound by residues 151-155 (EFLRE), Lys-204, Asn-208, 249-253 (FLKAG), and Gly-257. Cys-260 (nucleophile) is an active-site residue. Lys-263 is an NAD(+) binding site. Substrate is bound at residue Lys-320. Arg-327 is a binding site for NAD(+).

The protein belongs to the UDP-glucose/GDP-mannose dehydrogenase family. Post-translationally, phosphorylated on tyrosine residue(s). Phosphorylated by YwqD and dephosphorylated by YwqE in vitro.

It localises to the cytoplasm. It catalyses the reaction UDP-alpha-D-glucose + 2 NAD(+) + H2O = UDP-alpha-D-glucuronate + 2 NADH + 3 H(+). The protein operates within nucleotide-sugar biosynthesis; UDP-alpha-D-glucuronate biosynthesis; UDP-alpha-D-glucuronate from UDP-alpha-D-glucose: step 1/1. With respect to regulation, competitively inhibited by UDP-glucose. Activated by phosphorylation, which may increase affinity for NAD(+); inhibited by dephosphorylation. Catalyzes the conversion of UDP-glucose into UDP-glucuronate, one of the precursors of teichuronic acid. The polypeptide is UDP-glucose 6-dehydrogenase YwqF (ywqF) (Bacillus subtilis (strain 168)).